The primary structure comprises 143 residues: S-adenosylmethionine decarboxylase proenzyme (143 aa).

Ser-66 (schiff-base intermediate with substrate; via pyruvic acid) is an active-site residue. Ser-66 is subject to Pyruvic acid (Ser); by autocatalysis. The active-site Proton acceptor; for processing activity is the His-71. Residue Cys-86 is the Proton donor; for catalytic activity of the active site.

The protein belongs to the prokaryotic AdoMetDC family. Type 1 subfamily. In terms of assembly, heterotetramer of two alpha and two beta chains arranged as a dimer of alpha/beta heterodimers. Pyruvate is required as a cofactor. Post-translationally, is synthesized initially as an inactive proenzyme. Formation of the active enzyme involves a self-maturation process in which the active site pyruvoyl group is generated from an internal serine residue via an autocatalytic post-translational modification. Two non-identical subunits are generated from the proenzyme in this reaction, and the pyruvate is formed at the N-terminus of the alpha chain, which is derived from the carboxyl end of the proenzyme. The post-translation cleavage follows an unusual pathway, termed non-hydrolytic serinolysis, in which the side chain hydroxyl group of the serine supplies its oxygen atom to form the C-terminus of the beta chain, while the remainder of the serine residue undergoes an oxidative deamination to produce ammonia and the pyruvoyl group blocking the N-terminus of the alpha chain.

It carries out the reaction S-adenosyl-L-methionine + H(+) = S-adenosyl 3-(methylsulfanyl)propylamine + CO2. The protein operates within amine and polyamine biosynthesis; S-adenosylmethioninamine biosynthesis; S-adenosylmethioninamine from S-adenosyl-L-methionine: step 1/1. Functionally, catalyzes the decarboxylation of S-adenosylmethionine to S-adenosylmethioninamine (dcAdoMet), the propylamine donor required for the synthesis of the polyamines spermine and spermidine from the diamine putrescine. This Thermococcus kodakarensis (strain ATCC BAA-918 / JCM 12380 / KOD1) (Pyrococcus kodakaraensis (strain KOD1)) protein is S-adenosylmethionine decarboxylase proenzyme.